Reading from the N-terminus, the 976-residue chain is Metabotropic glutamate receptor (976 aa).

Positions 1-25 (MKQKNNNGTILVVVMVLSWSRVVDL) are cleaved as a signal peptide. Residues 26 to 626 (KSPSNTHTQD…IQYMKWNSLF (601 aa)) are Extracellular-facing. Asn-112 and Asn-143 each carry an N-linked (GlcNAc...) asparagine glycan. L-glutamate contacts are provided by residues Ser-158 and 179–181 (AST). The N-linked (GlcNAc...) asparagine glycan is linked to Asn-216. L-glutamate is bound at residue Tyr-229. An N-linked (GlcNAc...) asparagine glycan is attached at Asn-299. Asp-310 contacts L-glutamate. Asn-386 is a glycosylation site (N-linked (GlcNAc...) asparagine). Lys-417 serves as a coordination point for L-glutamate. Residues Asn-491 and Asn-524 are each glycosylated (N-linked (GlcNAc...) asparagine). The helical transmembrane segment at 627-649 (ALIPMAIAIFGIALTSIVIVLFA) threads the bilayer. At 650–663 (KNHDTPLVRASGRE) the chain is on the cytoplasmic side. A helical membrane pass occupies residues 664–684 (LSYTLLFGILVCYCNTFALIA). Residues 685-695 (KPTIGSCVLQR) are Extracellular-facing. Residues 696–714 (FGIGVGFSIIYSALLTKTN) traverse the membrane as a helical segment. The Cytoplasmic segment spans residues 715–738 (RISRIFHSASKSAQRLKYISPQSQ). Residues 739-759 (VVITTSLIAIQVLITMIWMVV) traverse the membrane as a helical segment. Residues 760–782 (EPPGTRFYYPDRREVILKCKIQD) are Extracellular-facing. A helical transmembrane segment spans residues 783-804 (MSFLFSQLYNMILITICTIYAI). At 805–817 (KTRKIPENFNESK) the chain is on the cytoplasmic side. Residues 818-840 (FIGFTMYTTCIIWLAFVPIYFGT) form a helical membrane-spanning segment. The Extracellular portion of the chain corresponds to 841–850 (GNSYEVQTTT). The chain crosses the membrane as a helical span at residues 851-876 (LCISISLSASVALVCLYSPKVYILVF). At 877 to 976 (HPDKNVRKLT…VEPICHIVNK (100 aa)) the chain is on the cytoplasmic side. Residues 920–946 (LTGGAVGTNASSSTLPTQNSPHLDEAS) form a disordered region. The segment covering 927-946 (TNASSSTLPTQNSPHLDEAS) has biased composition (polar residues).

Belongs to the G-protein coupled receptor 3 family. Expressed in the neurons of the larval CNS from the beginning of the first until the third instar. Expression in the third-instar larval CNS is restricted to a discrete number of somas and projections in the brain lobes and in the ventral ganglion. In the ventral nerve cord, expression is detected both in somas and projections. Expressed in the antennal lobes, the optic lobes, the central complex and the median bundle in the adult CNS.

The protein localises to the cell membrane. Its function is as follows. G-protein coupled receptor for glutamate. Ligand binding causes a conformation change that triggers signaling via guanine nucleotide-binding proteins (G proteins) and modulates the activity of down-stream effectors. This Drosophila melanogaster (Fruit fly) protein is Metabotropic glutamate receptor (mGluR).